Here is a 255-residue protein sequence, read N- to C-terminus: 4-hydroxy-tetrahydrodipicolinate reductase (255 aa).

Residues 9–14 (GYRGKM), 89–91 (GTT), and 115–118 (APNF) each bind NAD(+). Catalysis depends on His145, which acts as the Proton donor/acceptor. His146 is a (S)-2,3,4,5-tetrahydrodipicolinate binding site. Lys149 functions as the Proton donor in the catalytic mechanism. 155-156 (GT) is a binding site for (S)-2,3,4,5-tetrahydrodipicolinate.

Belongs to the DapB family.

It localises to the cytoplasm. It catalyses the reaction (S)-2,3,4,5-tetrahydrodipicolinate + NAD(+) + H2O = (2S,4S)-4-hydroxy-2,3,4,5-tetrahydrodipicolinate + NADH + H(+). The enzyme catalyses (S)-2,3,4,5-tetrahydrodipicolinate + NADP(+) + H2O = (2S,4S)-4-hydroxy-2,3,4,5-tetrahydrodipicolinate + NADPH + H(+). It participates in amino-acid biosynthesis; L-lysine biosynthesis via DAP pathway; (S)-tetrahydrodipicolinate from L-aspartate: step 4/4. Functionally, catalyzes the conversion of 4-hydroxy-tetrahydrodipicolinate (HTPA) to tetrahydrodipicolinate. The sequence is that of 4-hydroxy-tetrahydrodipicolinate reductase from Streptococcus uberis (strain ATCC BAA-854 / 0140J).